The chain runs to 357 residues: N-acetyl-gamma-glutamyl-phosphate reductase (357 aa).

The active site involves Cys160.

Belongs to the NAGSA dehydrogenase family. Type 1 subfamily.

The protein localises to the cytoplasm. The enzyme catalyses N-acetyl-L-glutamate 5-semialdehyde + phosphate + NADP(+) = N-acetyl-L-glutamyl 5-phosphate + NADPH + H(+). It functions in the pathway amino-acid biosynthesis; L-arginine biosynthesis; N(2)-acetyl-L-ornithine from L-glutamate: step 3/4. Functionally, catalyzes the NADPH-dependent reduction of N-acetyl-5-glutamyl phosphate to yield N-acetyl-L-glutamate 5-semialdehyde. This Prochlorococcus marinus (strain MIT 9313) protein is N-acetyl-gamma-glutamyl-phosphate reductase.